The chain runs to 457 residues: MSINPDAPQSNGEQERQIAIWQLKRTIEKLESYTGSGTSVISLLIPPGEQLSSVTGMLTNEYGTASNIKSRVNKNAVLSAITSAMSRLKLYNRLPPNGLAVYCGEIEEDGKNTKVVIDYTPYKPISNFIYLCDSKFHTEHLRELLTNDDTFGFIIMDGKETLMATLSGTVRTILDRSTVDLPKKHGRGGQSSVRFARLREEARHNYVRKVAERANSLFISSGPTGTNKPIVSGLILGGSADFKNVLSTSAIFDQRLQSIVMKQIDINYGGEQGFNQAIEMAGDTLKDVKLIQEVKLLTEFTENIAKDTKRVCFGITDTIRCLEMSAVEKLIVWDDLPYHRVTLQCVINGETSAPVIKYLLKSQMSNPKYLREVINGEEVQLDIMGDQLLLEWFVDNYKNYGASLEFITNRSAEGTQFCSGFGGIGGLLRWQVDLVEAARFMQESDEDSFMDDLEDFI.

The protein belongs to the eukaryotic release factor 1 family. Heterodimer of two subunits, one of which binds GTP.

The protein resides in the cytoplasm. Directs the termination of nascent peptide synthesis (translation) in response to the termination codons UAA, UAG and UGA. The protein is Eukaryotic peptide chain release factor subunit 1 (ERF1) of Giardia intestinalis (Giardia lamblia).